Consider the following 343-residue polypeptide: Palmitoyltransferase ZDHHC4 (343 aa).

The Lumenal segment spans residues Met-1–Asp-2. The chain crosses the membrane as a helical span at residues Phe-3–Ile-23. The Cytoplasmic portion of the chain corresponds to Phe-24–Thr-67. The helical transmembrane segment at Phe-68 to Phe-88 threads the bilayer. The Lumenal segment spans residues Gly-89–Tyr-100. Residues Leu-101 to Ala-121 form a helical membrane-spanning segment. Residues Asn-122 to Tyr-193 are Cytoplasmic-facing. A DHHC domain is found at Ser-149–Leu-199. Cys-179 acts as the S-palmitoyl cysteine intermediate in catalysis. Residues Phe-194–Ala-214 form a helical membrane-spanning segment. Topologically, residues Phe-215 to Arg-255 are lumenal. Residues Ile-256–Phe-276 form a helical membrane-spanning segment. The Cytoplasmic segment spans residues Ala-277–Lys-343. A Di-lysine motif motif is present at residues Lys-340–Lys-343.

Belongs to the DHHC palmitoyltransferase family. In terms of assembly, interacts with CPT1A.

It localises to the endoplasmic reticulum membrane. Its subcellular location is the golgi apparatus membrane. The protein resides in the cell membrane. It catalyses the reaction L-cysteinyl-[protein] + hexadecanoyl-CoA = S-hexadecanoyl-L-cysteinyl-[protein] + CoA. Functionally, palmitoyltransferase that could catalyze the addition of palmitate onto protein substrates including the D(2) dopamine receptor DRD2, GSK3B or MAVS. Mediates GSK3B palmitoylation to prevent its AKT1-mediated phosphorylation leading to activation of the STAT3 signaling pathway. Also catalyzes MAVS palmitoylation which promotes its stabilization and activation by inhibiting 'Lys-48'- but facilitating 'Lys-63'-linked ubiquitination. The protein is Palmitoyltransferase ZDHHC4 of Mus musculus (Mouse).